Consider the following 458-residue polypeptide: Bifunctional protein GlmU (458 aa).

Residues M1–R231 form a pyrophosphorylase region. UDP-N-acetyl-alpha-D-glucosamine-binding positions include L11 to G14, K25, Q78, G83 to T84, Y105 to D107, G142, E156, N171, and N229. Mg(2+) is bound at residue D107. N229 contributes to the Mg(2+) binding site. Residues L232 to A252 are linker. The segment at G253–K458 is N-acetyltransferase. UDP-N-acetyl-alpha-D-glucosamine-binding residues include R335 and K353. H365 serves as the catalytic Proton acceptor. UDP-N-acetyl-alpha-D-glucosamine is bound by residues Y368 and N379. Residues A382, N388–Y389, S407, A425, and R442 contribute to the acetyl-CoA site.

In the N-terminal section; belongs to the N-acetylglucosamine-1-phosphate uridyltransferase family. It in the C-terminal section; belongs to the transferase hexapeptide repeat family. As to quaternary structure, homotrimer. Mg(2+) serves as cofactor.

The protein localises to the cytoplasm. The catalysed reaction is alpha-D-glucosamine 1-phosphate + acetyl-CoA = N-acetyl-alpha-D-glucosamine 1-phosphate + CoA + H(+). It carries out the reaction N-acetyl-alpha-D-glucosamine 1-phosphate + UTP + H(+) = UDP-N-acetyl-alpha-D-glucosamine + diphosphate. The protein operates within nucleotide-sugar biosynthesis; UDP-N-acetyl-alpha-D-glucosamine biosynthesis; N-acetyl-alpha-D-glucosamine 1-phosphate from alpha-D-glucosamine 6-phosphate (route II): step 2/2. It functions in the pathway nucleotide-sugar biosynthesis; UDP-N-acetyl-alpha-D-glucosamine biosynthesis; UDP-N-acetyl-alpha-D-glucosamine from N-acetyl-alpha-D-glucosamine 1-phosphate: step 1/1. Its pathway is bacterial outer membrane biogenesis; LPS lipid A biosynthesis. In terms of biological role, catalyzes the last two sequential reactions in the de novo biosynthetic pathway for UDP-N-acetylglucosamine (UDP-GlcNAc). The C-terminal domain catalyzes the transfer of acetyl group from acetyl coenzyme A to glucosamine-1-phosphate (GlcN-1-P) to produce N-acetylglucosamine-1-phosphate (GlcNAc-1-P), which is converted into UDP-GlcNAc by the transfer of uridine 5-monophosphate (from uridine 5-triphosphate), a reaction catalyzed by the N-terminal domain. The sequence is that of Bifunctional protein GlmU from Sodalis glossinidius (strain morsitans).